The chain runs to 510 residues: ATP synthase subunit alpha 1 (510 aa).

167–174 (GDRATGKT) serves as a coordination point for ATP.

The protein belongs to the ATPase alpha/beta chains family. In terms of assembly, F-type ATPases have 2 components, CF(1) - the catalytic core - and CF(0) - the membrane proton channel. CF(1) has five subunits: alpha(3), beta(3), gamma(1), delta(1), epsilon(1). CF(0) has three main subunits: a(1), b(2) and c(9-12). The alpha and beta chains form an alternating ring which encloses part of the gamma chain. CF(1) is attached to CF(0) by a central stalk formed by the gamma and epsilon chains, while a peripheral stalk is formed by the delta and b chains.

Its subcellular location is the cell inner membrane. The catalysed reaction is ATP + H2O + 4 H(+)(in) = ADP + phosphate + 5 H(+)(out). Its function is as follows. Produces ATP from ADP in the presence of a proton gradient across the membrane. The alpha chain is a regulatory subunit. The chain is ATP synthase subunit alpha 1 from Paraburkholderia xenovorans (strain LB400).